The primary structure comprises 220 residues: uncharacterized protein (220 aa).

Positions 1 to 50 (MTDDVRDVNTETTDATEVAEIDSAAGEAGDSATEAFDTDSATESTAQKGQ) are disordered. The span at 39–48 (DSATESTAQK) shows a compositional bias: polar residues. A helical membrane pass occupies residues 65–85 (VPVILILLMLISGGATGWLYL).

To M.tuberculosis Rv1363c.

The protein localises to the membrane. This is an uncharacterized protein from Mycobacterium tuberculosis (strain CDC 1551 / Oshkosh).